The chain runs to 303 residues: Sulfate adenylyltransferase subunit 2 (303 aa).

Belongs to the PAPS reductase family. CysD subfamily. Heterodimer composed of CysD, the smaller subunit, and CysN.

The enzyme catalyses sulfate + ATP + H(+) = adenosine 5'-phosphosulfate + diphosphate. It participates in sulfur metabolism; hydrogen sulfide biosynthesis; sulfite from sulfate: step 1/3. Its function is as follows. With CysN forms the ATP sulfurylase (ATPS) that catalyzes the adenylation of sulfate producing adenosine 5'-phosphosulfate (APS) and diphosphate, the first enzymatic step in sulfur assimilation pathway. APS synthesis involves the formation of a high-energy phosphoric-sulfuric acid anhydride bond driven by GTP hydrolysis by CysN coupled to ATP hydrolysis by CysD. The protein is Sulfate adenylyltransferase subunit 2 of Sulfurovum sp. (strain NBC37-1).